Here is a 394-residue protein sequence, read N- to C-terminus: Arogenate dehydratase 2 (394 aa).

Positions 1–24 (MAATTTLRSPKIPHPPPESTPSNL) are disordered. Residues 1–47 (MAATTTLRSPKIPHPPPESTPSNLSYLSQISLTPVPKRRRFISIYAC) constitute a chloroplast transit peptide. The Prephenate dehydratase domain occupies 108–283 (RVAYQGVRGA…NVTRFLMLAR (176 aa)). Residues 297–388 (SVVFSLDEGP…TFLRVLGSYP (92 aa)) enclose the ACT domain.

In terms of tissue distribution, expressed at low levels in petals (corollas and tubes), stems, leaves, pistils, stamens, ovaries and sepals.

The protein localises to the plastid. Its subcellular location is the chloroplast stroma. The enzyme catalyses prephenate + H(+) = 3-phenylpyruvate + CO2 + H2O. The catalysed reaction is L-arogenate + H(+) = L-phenylalanine + CO2 + H2O. Its pathway is amino-acid biosynthesis; L-phenylalanine biosynthesis; L-phenylalanine from L-arogenate: step 1/1. In terms of biological role, converts the prephenate and L-arogenate produced from the shikimate-chorismate pathway into 3-phenylpyruvate and phenylalanine (Phe), respectively. Involved in floral volatile benzenoids and phenylpropanoids (FVBP) production. This Petunia hybrida (Petunia) protein is Arogenate dehydratase 2.